Here is a 407-residue protein sequence, read N- to C-terminus: Transcriptional regulator alnR (407 aa).

A DNA-binding region (zn(2)-C6 fungal-type) is located at residues 23 to 53 (SCDTCQEAKVKCSQHKPSCHRCLRHRQPCVY). Residues 53 to 85 (YSPQRRSGRPPKRPSPSSRLGPESNNSGDDIHN) are disordered. Polar residues predominate over residues 75-85 (ESNNSGDDIHN).

It is found in the nucleus. Functionally, transcriptional regulator involved in the positive regulation of the expression of the gene cluster that mediates the biosynthesis of asperlin, a polyketide showing anti-inflammatory, antitumor and antibiotic activities. The sequence is that of Transcriptional regulator alnR from Emericella nidulans (strain FGSC A4 / ATCC 38163 / CBS 112.46 / NRRL 194 / M139) (Aspergillus nidulans).